Reading from the N-terminus, the 386-residue chain is CUE domain-containing protein 1 (386 aa).

A compositionally biased stretch (low complexity) spans Met-1–Ser-10. A disordered region spans residues Met-1 to Arg-40. The span at Gly-11–Thr-27 shows a compositional bias: gly residues. Positions Glu-46–Leu-89 constitute a CUE domain. Disordered regions lie at residues Leu-147–Asn-172, Ser-195–Ser-225, and Asp-367–Gln-386. Gly residues predominate over residues Asn-199 to Glu-209.

The polypeptide is CUE domain-containing protein 1 (CUEDC1) (Homo sapiens (Human)).